A 639-amino-acid chain; its full sequence is Protein artemis (639 aa).

Disordered regions lie at residues M450–S496, S515–D570, and E590–P617. A compositionally biased stretch (acidic residues) spans E454 to A466. A compositionally biased stretch (polar residues) spans E518 to E537. Residues V548–D560 are compositionally biased toward low complexity.

The protein belongs to the DNA repair metallo-beta-lactamase (DRMBL) family.

It is found in the nucleus. Functionally, may have a role in the processing of DNA double strand breaks (DSBs) prior to their repair by the non homologous end joining (NHEJ) pathway. Probably exhibits both exonuclease and endonuclease activity. The chain is Protein artemis (dclre1c) from Danio rerio (Zebrafish).